Here is a 424-residue protein sequence, read N- to C-terminus: MASSNLIKQLQERGLVAQVTDEEALAERLAQGPIALYCGFDPTADSLHLGHLVPLLCLKRFQQAGHKPVALVGGATGLIGDPSFKAAERKLNTEETVQEWVDKIRKQVAPFLDFDCGENSAIAANNYDWFGNMNVLTFLRDIGKHFSVNQMINKEAVKQRLNREDEGMSITEFSYNLQQGYDWTCLNTHYYVELQIGGSDQRWNITSEIDLTRRLHQNHVLGLPDPLITNGDGTKFGKTEGGAVWLDPKKTSPYKFYQFWINTADADVYRFLKFFTFMSIEEINALEEEDKNSGKAPRAQYVLAEQVTRLVHGEEGLQAAKRITECLFSGSLSALSEADFEQLAQDGVPMVEMEKGADLMQALVDSELQPSRGQARKTIASNAITINGEKQSDPEYFFKEEDRLFGRFTLLRRGKKNYCLICWK.

Tyrosine 37 is an L-tyrosine binding site. A 'HIGH' region motif is present at residues 42–51 (PTADSLHLGH). Lysine 144 is modified (N6-acetyllysine). L-tyrosine is bound by residues tyrosine 175 and glutamine 179. The 'KMSKS' region signature appears at 235 to 239 (KFGKT). Lysine 238 provides a ligand contact to ATP. Positions 357 to 414 (ADLMQALVDSELQPSRGQARKTIASNAITINGEKQSDPEYFFKEEDRLFGRFTLLRRG) constitute an S4 RNA-binding domain.

The protein belongs to the class-I aminoacyl-tRNA synthetase family. TyrS type 1 subfamily. Homodimer.

It is found in the cytoplasm. The enzyme catalyses tRNA(Tyr) + L-tyrosine + ATP = L-tyrosyl-tRNA(Tyr) + AMP + diphosphate + H(+). Catalyzes the attachment of tyrosine to tRNA(Tyr) in a two-step reaction: tyrosine is first activated by ATP to form Tyr-AMP and then transferred to the acceptor end of tRNA(Tyr). The sequence is that of Tyrosine--tRNA ligase from Shigella flexneri serotype 5b (strain 8401).